We begin with the raw amino-acid sequence, 138 residues long: Transcription antitermination protein NusB (138 aa).

This sequence belongs to the NusB family.

Functionally, involved in transcription antitermination. Required for transcription of ribosomal RNA (rRNA) genes. Binds specifically to the boxA antiterminator sequence of the ribosomal RNA (rrn) operons. The protein is Transcription antitermination protein NusB of Geobacter sulfurreducens (strain ATCC 51573 / DSM 12127 / PCA).